Here is a 418-residue protein sequence, read N- to C-terminus: D-amino acid dehydrogenase 1 (418 aa).

3–17 (IMVLGGGVIGVTTAY) lines the FAD pocket.

The protein belongs to the DadA oxidoreductase family. FAD serves as cofactor.

The catalysed reaction is a D-alpha-amino acid + A + H2O = a 2-oxocarboxylate + AH2 + NH4(+). The protein operates within amino-acid degradation; D-alanine degradation; NH(3) and pyruvate from D-alanine: step 1/1. Functionally, oxidative deamination of D-amino acids. This Mesorhizobium japonicum (strain LMG 29417 / CECT 9101 / MAFF 303099) (Mesorhizobium loti (strain MAFF 303099)) protein is D-amino acid dehydrogenase 1 (dadA1).